We begin with the raw amino-acid sequence, 512 residues long: MGIQAAEISAILKEQIKNFGQAAEVAEVGRVLSVGDGIARVHGLDNVQAGEMVEFPGGIRGMALNLEVDNVGVVIFGDDRSIKEGDTVKRTKSIVDVPAGDALLGRVVDGLGNPIDGKGPIAATERRVADVKAPGIIPRKGVHEPMATGLKSVDAMIPIGRGQRELIIGDRQTGKTAIALDTILNQKSYNEAAGDDESKKLYCIYVAIGQKRSTVAQLVKKLEETGAIAYTLVVAATASDPAPMQFLAPYAATAMAEYFRDNGRHALIIYDDLSKQAVAYRQMSLLLRRPPGREAYPGDVFYLHSRLLERSAKLNKEHGSGSLTALPIIETQGGDVSAFIPTNVISITDGQIFLETELFYQGIRPAVNTGLSVSRVGSSAQTDAMKSVAGPVKLELAQYREMAAFAQFGSDLDAATQQLLNRGARLTELMKQPQYAPLTNAEIVCVIFAGTKGYLDKVPVKDVGRWEQGLLKHLRTNARDLLADITNNDRKVKGELENKIRAALDTYAKDFA.

An ATP-binding site is contributed by 169–176 (GDRQTGKT).

It belongs to the ATPase alpha/beta chains family. In terms of assembly, F-type ATPases have 2 components, CF(1) - the catalytic core - and CF(0) - the membrane proton channel. CF(1) has five subunits: alpha(3), beta(3), gamma(1), delta(1), epsilon(1). CF(0) has four main subunits: a(1), b(1), b'(1) and c(9-12).

The protein resides in the cell inner membrane. The enzyme catalyses ATP + H2O + 4 H(+)(in) = ADP + phosphate + 5 H(+)(out). Produces ATP from ADP in the presence of a proton gradient across the membrane. The alpha chain is a regulatory subunit. The polypeptide is ATP synthase subunit alpha (Cereibacter sphaeroides (strain ATCC 17025 / ATH 2.4.3) (Rhodobacter sphaeroides)).